Reading from the N-terminus, the 849-residue chain is A-kinase anchor protein 4 (849 aa).

Residues Met-1–Asn-188 constitute a propeptide that is removed on maturation. A phosphoserine mark is found at Ser-96, Ser-130, Ser-190, and Ser-204. Residues Lys-183–Val-205 show a composition bias toward polar residues. Residues Lys-183–Gly-210 form a disordered region. Thr-207 carries the post-translational modification Phosphothreonine. Phosphoserine occurs at positions 213, 226, and 271. The segment at Phe-219 to Ala-232 is PKA-RI and PKA-RII subunit binding domain. The residue at position 301 (Tyr-301) is a Phosphotyrosine. A phosphoserine mark is found at Ser-302, Ser-341, Ser-431, Ser-442, Ser-444, Ser-463, Ser-492, Ser-497, and Ser-504. The PKA-RI-alpha subunit binding domain stretch occupies residues Tyr-335 to Met-344. The residue at position 506 (Thr-506) is a Phosphothreonine. Phosphoserine is present on Ser-538. Phosphoserine; by STK33 is present on Ser-583. A phosphoserine mark is found at Ser-628, Ser-633, Ser-652, and Ser-702.

This sequence belongs to the AKAP110 family. In terms of assembly, interacts with PRKAR1A and PRKAR2A. Interacts with ENO4. Interacts with QRICH2. Post-translationally, phosphorylated by STK33 during sperm flagella assembly. In terms of tissue distribution, expressed in the fibrous sheath of spermatozoa (at protein level). Expressed in step 1 to step 6 spermatids, abundance then increases during steps 8 to 12, abundance decreases thereafter.

It is found in the cell projection. It localises to the cilium. Its subcellular location is the flagellum. In terms of biological role, major structural component of sperm fibrous sheath. Plays a role in sperm motility. The sequence is that of A-kinase anchor protein 4 from Mus musculus (Mouse).